Consider the following 354-residue polypeptide: Yop proteins translocation protein U (354 aa).

A disordered region spans residues 1–20 (MSGEKTEQPTPKKIRDARKK). 5 helical membrane passes run 30–50 (VSTALIVALSAMLMGLSDYYF), 79–99 (VLLEFFYLCFPLLTVAALMAI), 138–158 (VEFLKSILKVVLLSILIWIII), 163–183 (VTLLQLPTCGIECITPLLGQI), and 187–207 (LMVICTVGFVVISIADYAFEY).

It belongs to the type III secretion exporter family.

Its subcellular location is the cell membrane. Functionally, component of the yop secretion machinery. The protein is Yop proteins translocation protein U (yscU) of Yersinia pestis.